Consider the following 78-residue polypeptide: Large ribosomal subunit protein bL28 (78 aa).

This sequence belongs to the bacterial ribosomal protein bL28 family.

In Prochlorococcus marinus (strain MIT 9303), this protein is Large ribosomal subunit protein bL28.